We begin with the raw amino-acid sequence, 83 residues long: Small ribosomal subunit protein eS21 (83 aa).

This sequence belongs to the eukaryotic ribosomal protein eS21 family. As to quaternary structure, component of the 40S small ribosomal subunit.

The protein localises to the cytoplasm. It localises to the cytosol. The protein resides in the rough endoplasmic reticulum. In terms of biological role, component of the small ribosomal subunit. The ribosome is a large ribonucleoprotein complex responsible for the synthesis of proteins in the cell. In Xenopus tropicalis (Western clawed frog), this protein is Small ribosomal subunit protein eS21 (rps21).